A 100-amino-acid polypeptide reads, in one-letter code: Urease subunit gamma (100 aa).

The protein belongs to the urease gamma subunit family. As to quaternary structure, heterotrimer of UreA (gamma), UreB (beta) and UreC (alpha) subunits. Three heterotrimers associate to form the active enzyme.

The protein resides in the cytoplasm. It carries out the reaction urea + 2 H2O + H(+) = hydrogencarbonate + 2 NH4(+). The protein operates within nitrogen metabolism; urea degradation; CO(2) and NH(3) from urea (urease route): step 1/1. The sequence is that of Urease subunit gamma from Ectopseudomonas mendocina (strain ymp) (Pseudomonas mendocina).